Here is a 189-residue protein sequence, read N- to C-terminus: Inosine triphosphate pyrophosphatase (189 aa).

14–19 (TGNQNK) contributes to the ITP binding site. Glutamate 42 is a binding site for Mg(2+). ITP contacts are provided by residues lysine 54, 70 to 71 (DT), lysine 87, 146 to 149 (FGWD), lysine 167, and 172 to 173 (HR).

It belongs to the HAM1 NTPase family. As to quaternary structure, homodimer. Mg(2+) is required as a cofactor. The cofactor is Mn(2+).

The protein localises to the cytoplasm. The protein resides in the nucleus. It catalyses the reaction ITP + H2O = IMP + diphosphate + H(+). The enzyme catalyses dITP + H2O = dIMP + diphosphate + H(+). It carries out the reaction XTP + H2O = XMP + diphosphate + H(+). Its function is as follows. Pyrophosphatase that hydrolyzes non-canonical purine nucleotides such as inosine triphosphate (ITP), deoxyinosine triphosphate (dITP) or xanthosine 5'-triphosphate (XTP) to their respective monophosphate derivatives. The enzyme does not distinguish between the deoxy- and ribose forms. Probably excludes non-canonical purines from RNA and DNA precursor pools, thus preventing their incorporation into RNA and DNA and avoiding chromosomal lesions. This Pyricularia oryzae (strain 70-15 / ATCC MYA-4617 / FGSC 8958) (Rice blast fungus) protein is Inosine triphosphate pyrophosphatase.